A 156-amino-acid polypeptide reads, in one-letter code: MSILTTAEEIINGQRAQDYGDAKENHERIATLWGAYKRGVEFTPEDVAVMMILLKIARFMENGYHQDTVVDIAGYAGVLEKMQLPEDERYPKGPRQWDTLLDVPADVKTVTNATGVKWIYYPNGLHHTKVGKRRWSGGNASSHEERMRGPFTEVAE.

The segment at 132-156 (KRRWSGGNASSHEERMRGPFTEVAE) is disordered.

The chain is Gene 55 protein (55) from Mycobacterium phage L5 (Mycobacteriophage L5).